Reading from the N-terminus, the 196-residue chain is dITP/XTP pyrophosphatase (196 aa).

Residue 9 to 14 (TSNAGK) participates in substrate binding. Glutamate 39 and aspartate 68 together coordinate Mg(2+). Catalysis depends on aspartate 68, which acts as the Proton acceptor. Residues serine 69, 147-150 (FGYD), lysine 170, and 175-176 (HR) contribute to the substrate site.

The protein belongs to the HAM1 NTPase family. Homodimer. The cofactor is Mg(2+).

It catalyses the reaction XTP + H2O = XMP + diphosphate + H(+). The catalysed reaction is dITP + H2O = dIMP + diphosphate + H(+). The enzyme catalyses ITP + H2O = IMP + diphosphate + H(+). Its function is as follows. Pyrophosphatase that catalyzes the hydrolysis of nucleoside triphosphates to their monophosphate derivatives, with a high preference for the non-canonical purine nucleotides XTP (xanthosine triphosphate), dITP (deoxyinosine triphosphate) and ITP. Seems to function as a house-cleaning enzyme that removes non-canonical purine nucleotides from the nucleotide pool, thus preventing their incorporation into DNA/RNA and avoiding chromosomal lesions. The sequence is that of dITP/XTP pyrophosphatase from Nostoc sp. (strain PCC 7120 / SAG 25.82 / UTEX 2576).